We begin with the raw amino-acid sequence, 301 residues long: Ornithine carbamoyltransferase (301 aa).

Residues 53–56, Gln80, Arg104, and 131–134 each bind carbamoyl phosphate; these read STRT and HPCQ. Residues Asn162, Asp221, and 225–226 each bind L-ornithine; that span reads SI. Carbamoyl phosphate-binding positions include 260 to 261 and Arg288; that span reads CL.

This sequence belongs to the aspartate/ornithine carbamoyltransferase superfamily. OTCase family.

It is found in the cytoplasm. The catalysed reaction is carbamoyl phosphate + L-ornithine = L-citrulline + phosphate + H(+). It functions in the pathway amino-acid biosynthesis; L-arginine biosynthesis; L-arginine from L-ornithine and carbamoyl phosphate: step 1/3. Reversibly catalyzes the transfer of the carbamoyl group from carbamoyl phosphate (CP) to the N(epsilon) atom of ornithine (ORN) to produce L-citrulline. This Cenarchaeum symbiosum (strain A) protein is Ornithine carbamoyltransferase.